The chain runs to 111 residues: Large ribosomal subunit protein uL22 (111 aa).

The protein belongs to the universal ribosomal protein uL22 family. Part of the 50S ribosomal subunit.

In terms of biological role, this protein binds specifically to 23S rRNA; its binding is stimulated by other ribosomal proteins, e.g. L4, L17, and L20. It is important during the early stages of 50S assembly. It makes multiple contacts with different domains of the 23S rRNA in the assembled 50S subunit and ribosome. Functionally, the globular domain of the protein is located near the polypeptide exit tunnel on the outside of the subunit, while an extended beta-hairpin is found that lines the wall of the exit tunnel in the center of the 70S ribosome. The polypeptide is Large ribosomal subunit protein uL22 (Clostridium perfringens (strain ATCC 13124 / DSM 756 / JCM 1290 / NCIMB 6125 / NCTC 8237 / Type A)).